The following is a 299-amino-acid chain: Homoserine kinase (299 aa).

Residue 88–98 (PLGRGLGSSAT) coordinates ATP.

The protein belongs to the GHMP kinase family. Homoserine kinase subfamily.

The protein localises to the cytoplasm. It catalyses the reaction L-homoserine + ATP = O-phospho-L-homoserine + ADP + H(+). Its pathway is amino-acid biosynthesis; L-threonine biosynthesis; L-threonine from L-aspartate: step 4/5. Catalyzes the ATP-dependent phosphorylation of L-homoserine to L-homoserine phosphate. The chain is Homoserine kinase from Gloeobacter violaceus (strain ATCC 29082 / PCC 7421).